The sequence spans 570 residues: Methionine--tRNA ligase (570 aa).

The short motif at 11–21 is the 'HIGH' region element; the sequence is PYVQTVPHLGN. Zn(2+) contacts are provided by cysteine 143, cysteine 146, cysteine 156, and cysteine 159. The 'KMSKS' region motif lies at 333-337; sequence KFSKS. Lysine 336 lines the ATP pocket.

The protein belongs to the class-I aminoacyl-tRNA synthetase family. MetG type 1 subfamily. Zn(2+) serves as cofactor.

It localises to the cytoplasm. The catalysed reaction is tRNA(Met) + L-methionine + ATP = L-methionyl-tRNA(Met) + AMP + diphosphate. Is required not only for elongation of protein synthesis but also for the initiation of all mRNA translation through initiator tRNA(fMet) aminoacylation. This Pyrobaculum calidifontis (strain DSM 21063 / JCM 11548 / VA1) protein is Methionine--tRNA ligase.